A 591-amino-acid chain; its full sequence is Serine/threonine-protein kinase PAK 4 (591 aa).

One can recognise a CRIB domain in the interval 11 to 24 (ISAPSNFEHRVHTG). The tract at residues 25–320 (FDQHEQKFTG…VVDPGDPRSY (296 aa)) is linker. Ser-41 carries the phosphoserine modification. Lys-78 is modified (N6-methyllysine). Positions 95 to 301 (TRSNSLRRDS…PQREPQRVSH (207 aa)) are disordered. A phosphoserine mark is found at Ser-104 and Ser-148. Residues 149-164 (GDRRRAGPEKRPKSSR) show a composition bias toward basic and acidic residues. Phosphoserine is present on residues Ser-167 and Ser-181. Thr-187 is subject to Phosphothreonine. The span at 191–202 (AGLASGAKLAAG) shows a compositional bias: low complexity. A Phosphoserine modification is found at Ser-195. Residue Thr-207 is modified to Phosphothreonine. Residues 242–260 (SSSSSSRPPTRARGAPSPG) show a composition bias toward low complexity. Ser-258 and Ser-267 each carry phosphoserine. Residues 271 to 290 (LAPPACTPAAPAVPGPPGPR) are compositionally biased toward pro residues. A Phosphoserine modification is found at Ser-291. A compositionally biased stretch (basic and acidic residues) spans 292-301 (PQREPQRVSH). Residues 298-323 (RVSHEQFRAALQLVVDPGDPRSYLDN) are GEF-interaction domain (GID). Residues 321 to 572 (LDNFIKIGEG…AAELLKHPFL (252 aa)) form the Protein kinase domain. Residues 327–335 (IGEGSTGIV), Lys-350, and 396–398 (EFL) contribute to the ATP site. The active-site Proton acceptor is Asp-440. 458–460 (DFG) serves as a coordination point for ATP. Phosphoserine; by autocatalysis is present on Ser-474.

The protein belongs to the protein kinase superfamily. STE Ser/Thr protein kinase family. STE20 subfamily. As to quaternary structure, interacts with FGFR2 and GRB2. Interacts tightly with GTP-bound but not GDP-bound CDC42/p21 and weakly with RAC1. Interacts with INKA1. Interacts with SH3RF2. Interacts with RHOU and PAXI; the PAK4-RHOU complex protects RHOU from ubiquitination and acts as a scaffold to suppport paxillin/PAXI phosphorylation. Post-translationally, autophosphorylated on serine residues when activated by CDC42/p21. Phosphorylated on tyrosine residues upon stimulation of FGFR2. Methylated by SETD6. Polyubiquitinated, leading to its proteasomal degradation. As to expression, highest expression in prostate, testis and colon.

The protein localises to the cytoplasm. The enzyme catalyses L-seryl-[protein] + ATP = O-phospho-L-seryl-[protein] + ADP + H(+). It carries out the reaction L-threonyl-[protein] + ATP = O-phospho-L-threonyl-[protein] + ADP + H(+). Inhibited by INKA1; which inhibits the serine/threonine-protein kinase activity by binding PAK4 in a substrate-like manner. In terms of biological role, serine/threonine-protein kinase that plays a role in a variety of different signaling pathways including cytoskeleton regulation, cell adhesion turnover, cell migration, growth, proliferation or cell survival. Activation by various effectors including growth factor receptors or active CDC42 and RAC1 results in a conformational change and a subsequent autophosphorylation on several serine and/or threonine residues. Phosphorylates and inactivates the protein phosphatase SSH1, leading to increased inhibitory phosphorylation of the actin binding/depolymerizing factor cofilin. Decreased cofilin activity may lead to stabilization of actin filaments. Phosphorylates LIMK1, a kinase that also inhibits the activity of cofilin. Phosphorylates integrin beta5/ITGB5 and thus regulates cell motility. Phosphorylates ARHGEF2 and activates the downstream target RHOA that plays a role in the regulation of assembly of focal adhesions and actin stress fibers. Stimulates cell survival by phosphorylating the BCL2 antagonist of cell death BAD. Alternatively, inhibits apoptosis by preventing caspase-8 binding to death domain receptors in a kinase independent manner. Plays a role in cell-cycle progression by controlling levels of the cell-cycle regulatory protein CDKN1A and by phosphorylating RAN. Promotes kinase-independent stabilization of RHOU, thereby contributing to focal adhesion disassembly during cell migration. The sequence is that of Serine/threonine-protein kinase PAK 4 from Homo sapiens (Human).